A 389-amino-acid chain; its full sequence is Meiosis-specific protein MEI4 (389 aa).

Positions 1–127 (MDIQPWYLKT…LSQHFVESTD (127 aa)) are interaction with REC114.

The protein belongs to the MEI4L family. Part of the MCD recombinosome complex, at least composed of IHO1, REC114 and MEI4. Forms a complex with REC114; the interaction is required for MEI4 stability. Interacts (via N-terminal domain) with REC114 (via C-terminal domain). Interacts with IHO1. In terms of tissue distribution, expressed in adult testis and brain and in embryonic ovary.

Its subcellular location is the chromosome. Required for DNA double-strand breaks (DSBs) formation in unsynapsed regions during meiotic recombination. Probably acts by forming a complex with IHO1 and REC114, which activates DSBs formation in unsynapsed regions, an essential step to ensure completion of synapsis. The protein is Meiosis-specific protein MEI4 of Mus musculus (Mouse).